The primary structure comprises 304 residues: MSVVSAITVTVPATTANLGPGFDCIGAALKLYNEFRFTRLEEGGLIIHVSGTEAERVQTDESNLLYQAFVKFYQHIEQTPPTVKIEIKLGVPLARGLGSSATAIVGGLVAANQLEGATLSQSQVMELAIAMEGHPDNVVPALLGGCRLAATSGTAWEICDVPWHKDVVPVVAIPNFELSTSEARGVLPTEVSRADAIFNTAHLGLLLRGLETGNGQWLKTALQDKLHQPYRKALIPSYDAVNIAAVSAGAYGMVISGAGPTLLALADQLHSEAVEAAMLAAWQEEGITAEVRSLSLDTQGAKSF.

Residue 92–102 (PLARGLGSSAT) participates in ATP binding.

It belongs to the GHMP kinase family. Homoserine kinase subfamily.

The protein resides in the cytoplasm. It carries out the reaction L-homoserine + ATP = O-phospho-L-homoserine + ADP + H(+). It participates in amino-acid biosynthesis; L-threonine biosynthesis; L-threonine from L-aspartate: step 4/5. In terms of biological role, catalyzes the ATP-dependent phosphorylation of L-homoserine to L-homoserine phosphate. The polypeptide is Homoserine kinase (Nostoc punctiforme (strain ATCC 29133 / PCC 73102)).